Reading from the N-terminus, the 179-residue chain is Viral interleukin-10 homolog (179 aa).

The first 18 residues, 1–18 (MFRASLLCCLVLLAGVWA), serve as a signal peptide directing secretion. Cystine bridges form between Cys-30–Cys-127 and Cys-80–Cys-133. Asn-100 and Asn-135 each carry an N-linked (GlcNAc...) asparagine; by host glycan.

Belongs to the IL-10 family.

It is found in the secreted. Functionally, down-regulates the expression of the TAP1 gene (transporter associated with antigen processing), thereby affecting the transport of peptides into the endoplasmic reticulum and subsequent peptide loading by MHC class I molecules. In consequence, infected cells are masked for immune recognition by cytotoxic T-lymphocytes. The polypeptide is Viral interleukin-10 homolog (Equus caballus (Horse)).